The following is a 532-amino-acid chain: Mitogen-activated protein kinase kinase mkk1 (532 aa).

Positions 235–505 (IVELGGLGEG…PWKMLEHPWM (271 aa)) constitute a Protein kinase domain. ATP contacts are provided by residues 241-249 (LGEGAGGAV) and Lys-264. Asp-362 acts as the Proton acceptor in catalysis.

Belongs to the protein kinase superfamily. STE Ser/Thr protein kinase family. MAP kinase kinase subfamily.

The enzyme catalyses L-seryl-[protein] + ATP = O-phospho-L-seryl-[protein] + ADP + H(+). The catalysed reaction is L-threonyl-[protein] + ATP = O-phospho-L-threonyl-[protein] + ADP + H(+). Its function is as follows. Mitogen-activated protein kinase kinase, part of the mkh1-mkk1-spm1 MAPK cascade that regulates regulates vegetative growth, conidial formation, colony surface hydrophobicity, osmotic stress, cell wall integrity maintenance, carbon and nitrogen source utilization, chitin distribution, septa formation, and pathogenicity. The polypeptide is Mitogen-activated protein kinase kinase mkk1 (Cytospora mali (Apple Valsa canker fungus)).